A 133-amino-acid chain; its full sequence is Heat shock protein 15 (133 aa).

One can recognise an S4 RNA-binding domain in the interval 9–71 (VRLDKWLWAA…DERTVIVKAI (63 aa)). The tract at residues 105–133 (NALTMPHPDRRPDKKERRDLLRFKHGDSE) is disordered. Over residues 111–133 (HPDRRPDKKERRDLLRFKHGDSE) the composition is skewed to basic and acidic residues.

The protein belongs to the HSP15 family. Monomer.

Functionally, involved in the recycling of free 50S ribosomal subunits that still carry a nascent chain. Binds RNA more specifically than DNA. Binds with very high affinity to the free 50S ribosomal subunit. Does not bind it when it is part of the 70S ribosome. This chain is Heat shock protein 15 (hslR), found in Escherichia coli O157:H7.